Reading from the N-terminus, the 291-residue chain is Methionine aminopeptidase (291 aa).

His-118 serves as a coordination point for substrate. Residues Asp-135, Asp-146, and His-209 each contribute to the a divalent metal cation site. His-216 lines the substrate pocket. Residues Glu-241 and Glu-273 each contribute to the a divalent metal cation site.

The protein belongs to the peptidase M24A family. Methionine aminopeptidase type 1 subfamily. Monomer. It depends on Co(2+) as a cofactor. Requires Zn(2+) as cofactor. The cofactor is Mn(2+). Fe(2+) serves as cofactor.

The enzyme catalyses Release of N-terminal amino acids, preferentially methionine, from peptides and arylamides.. In terms of biological role, removes the N-terminal methionine from nascent proteins. The N-terminal methionine is often cleaved when the second residue in the primary sequence is small and uncharged (Met-Ala-, Cys, Gly, Pro, Ser, Thr, or Val). Requires deformylation of the N(alpha)-formylated initiator methionine before it can be hydrolyzed. This chain is Methionine aminopeptidase, found in Chlamydia trachomatis serovar D (strain ATCC VR-885 / DSM 19411 / UW-3/Cx).